The primary structure comprises 576 residues: MNIRNDVQKALQHLFGRTAVPQETSKVNEALNGEKRLLLGKVLRLLGDQHALIQVGNQTVQGKLETQLRPQAYYWFSYEKKTAEQTGRLQVVQSFDQNPKTIQDAAGKLLNAISVKTSNAALMMTGAMLKSKTPVTENDIKTAVRWMDTLPSQDTKKAVETVLFALKRDLPIHSEILNGVHAVKSPVPLHQHVSQLLQAIDQNPQQSQMMSKLKEAVTVLLNSEIDVHAERLIDKLISLTDNTKAPSPTNTAGSRELSTPAGSPGKASLPIANHTAEQGSIQEEPVKTAADIPIKEARQLLVKLTESAEKNSLQIVKEAANWIKAAASSGDSKSLAASAVLQAAQVTDQEAEVFLKAVQQTAPHLADKADVLSFLSKVKTAIGARDEVAFIKAFEQGSAVTSGEMQSIKLALSALRASHEVAEPVKQEADQLFHKLNGQLFMQQDHPSYSQIVMSFPMFSKSGVQDMTVLFKGKKEADGKLDPSHCRLLFLLQLDTLKETVVDCLVQQKVMTITIETDFELQAAIDPMVPALKQGLKEMGYSLSGVNAKKRVHTEEKASIDQYITSISDQEVDVKI.

A compositionally biased stretch (polar residues) spans 241–261; sequence DNTKAPSPTNTAGSRELSTPA. The tract at residues 241–270 is disordered; it reads DNTKAPSPTNTAGSRELSTPAGSPGKASLP.

This is an uncharacterized protein from Bacillus subtilis (strain 168).